Here is a 480-residue protein sequence, read N- to C-terminus: Alpha-glucosidase (480 aa).

Residue 4–70 (VKIGIIGAGS…ADLKFEKTMN (67 aa)) coordinates NAD(+). Positions 119 and 153 each coordinate substrate. Cys-174 is a Mn(2+) binding site. The active-site Proton donor is His-175. His-203 is a binding site for Mn(2+). The Proton acceptor role is filled by Asp-260.

This sequence belongs to the glycosyl hydrolase 4 family. In terms of assembly, homodimer. NAD(+) serves as cofactor. Requires Mn(2+) as cofactor. Co(2+) is required as a cofactor. It depends on Ni(2+) as a cofactor.

The catalysed reaction is Hydrolysis of terminal, non-reducing (1-&gt;4)-linked alpha-D-glucose residues with release of alpha-D-glucose.. Its activity is regulated as follows. Inhibited by Hg(2+) ion and EDTA. In terms of biological role, alpha-glycosidase with a very broad specificity. Hydrolyzes maltose and other small maltooligosaccharides but is inactive against the polymeric substrate starch. AglA is not specific with respect to the configuration at the C-4 position of its substrates because glycosidic derivatives of D-galactose are also hydrolyzed. Does not cleave beta-glycosidic bonds. This Thermotoga maritima (strain ATCC 43589 / DSM 3109 / JCM 10099 / NBRC 100826 / MSB8) protein is Alpha-glucosidase (aglA).